The following is a 238-amino-acid chain: 7-cyano-7-deazaguanine synthase (238 aa).

14–24 (FSGGQDSATCL) provides a ligand contact to ATP. Zn(2+)-binding residues include Cys202, Cys217, Cys220, and Cys223.

This sequence belongs to the QueC family. Zn(2+) is required as a cofactor.

The enzyme catalyses 7-carboxy-7-deazaguanine + NH4(+) + ATP = 7-cyano-7-deazaguanine + ADP + phosphate + H2O + H(+). The protein operates within purine metabolism; 7-cyano-7-deazaguanine biosynthesis. Its function is as follows. Catalyzes the ATP-dependent conversion of 7-carboxy-7-deazaguanine (CDG) to 7-cyano-7-deazaguanine (preQ(0)). The polypeptide is 7-cyano-7-deazaguanine synthase (Nitrobacter hamburgensis (strain DSM 10229 / NCIMB 13809 / X14)).